The primary structure comprises 239 residues: Ribosomal RNA large subunit methyltransferase E (239 aa).

The interval 1–20 (MTKAPIAGNRTGRKLGQRVK) is disordered. The segment covering 11–20 (TGRKLGQRVK) has biased composition (basic residues). S-adenosyl-L-methionine-binding residues include glycine 81, tryptophan 83, aspartate 104, aspartate 120, and aspartate 144. Lysine 184 (proton acceptor) is an active-site residue.

The protein belongs to the class I-like SAM-binding methyltransferase superfamily. RNA methyltransferase RlmE family.

It localises to the cytoplasm. It catalyses the reaction uridine(2552) in 23S rRNA + S-adenosyl-L-methionine = 2'-O-methyluridine(2552) in 23S rRNA + S-adenosyl-L-homocysteine + H(+). Its function is as follows. Specifically methylates the uridine in position 2552 of 23S rRNA at the 2'-O position of the ribose in the fully assembled 50S ribosomal subunit. In Rhizobium etli (strain ATCC 51251 / DSM 11541 / JCM 21823 / NBRC 15573 / CFN 42), this protein is Ribosomal RNA large subunit methyltransferase E.